A 146-amino-acid chain; its full sequence is uncharacterized protein (146 aa).

The next 4 helical transmembrane spans lie at 1–21 (MFANAGLSPFVAIWTARAASL), 35–55 (AAVYVGSAVVPAAVAGPLFVG), 87–107 (GGAGGWVGVHCPVVGGGGVGH), and 111–131 (AIAAAVSVHSTCMPAAFGGHL).

The protein resides in the cell membrane. This is an uncharacterized protein from Mycobacterium tuberculosis (strain CDC 1551 / Oshkosh).